Here is a 425-residue protein sequence, read N- to C-terminus: Histone-binding protein RBBP7 (425 aa).

The residue at position 2 (alanine 2) is an N-acetylalanine. Phosphoserine is present on serine 3. Lysine 4 carries the post-translational modification N6-acetyllysine; alternate. A Glycyl lysine isopeptide (Lys-Gly) (interchain with G-Cter in SUMO2); alternate cross-link involves residue lysine 4. Residue lysine 4 forms a Glycyl lysine isopeptide (Lys-Gly) (interchain with G-Cter in ubiquitin); alternate linkage. A Phosphothreonine modification is found at threonine 10. 2 positions are modified to phosphoserine: glutamate 13 and serine 95. WD repeat units lie at residues 47 to 122, 128 to 173, 181 to 217, 228 to 269, 275 to 312, 318 to 369, and 376 to 403; these read QWLP…KINH, RARY…LRLR, GLSW…KIVD, VVED…HLVD, VNCL…LHTF, EIFQ…LFIH, and ISDF…IWQM. Lysine 101 participates in a covalent cross-link: Glycyl lysine isopeptide (Lys-Gly) (interchain with G-Cter in SUMO2). Lysine 119 is subject to N6-acetyllysine. Residue lysine 155 forms a Glycyl lysine isopeptide (Lys-Gly) (interchain with G-Cter in SUMO2) linkage. Lysine 159 carries the post-translational modification N6-acetyllysine; alternate. Lysine 159 participates in a covalent cross-link: Glycyl lysine isopeptide (Lys-Gly) (interchain with G-Cter in SUMO2); alternate. Serine 354 carries the post-translational modification Phosphoserine.

It belongs to the WD repeat RBAP46/RBAP48/MSI1 family. As to quaternary structure, binds directly to helix 1 of the histone fold of histone H4, a region that is not accessible when H4 is in chromatin. Subunit of the type B histone acetyltransferase (HAT) complex, composed of RBBP7 and HAT1. Subunit of the core histone deacetylase (HDAC) complex, which is composed of HDAC1, HDAC2, RBBP4 and RBBP7. The core HDAC complex associates with SIN3A, ARID4B/SAP180, SAP18, SAP30, SAP130, SUDS3/SAP45 and possibly ARID4A/RBP1 and ING1 to form the SIN3 HDAC complex. Component of the nucleosome remodeling and deacetylase (NuRD) repressor complex, composed of core proteins MTA1, MTA2, MTA3, RBBP4, RBBP7, HDAC1, HDAC2, MBD2, MBD3, and peripherally associated proteins CDK2AP1, CDK2AP2, GATAD2A, GATAD2B, CHD3, CHD4 and CHD5. The exact stoichiometry of the NuRD complex is unknown, and some subunits such as MBD2 and MBD3, GATAD2A and GATAD2B, and CHD3, CHD4 and CHD5 define mutually exclusive NuRD complexes. The NuRD complex may interact with MBD3L1. The NuRD complex may interact with MBD3L2. Subunit of the PRC2/EED-EZH2 complex, which is composed of at least EED, EZH2, RBBP4, RBBP7 and SUZ12. The PRC2/EED-EZH2 complex may also associate with HDAC1. Component of the NURF-1 ISWI chromatin remodeling complex (also called the nucleosome-remodeling factor (NURF) complex) at least composed of SMARCA1 (isoform 2), BPTF, RBBP4 and RBBP7. Within the complex interacts with isoform 2 of SMARCA1. Component of the BPFT-SMARCA1 complex at least composed of SMARCA1 (isoform 1), BPFT, RBBP4 and RBBP7; the complex is catalytically inactive and does not remodel chromatin. Within the complex interacts with isoform 1 of SMARCA1. Interacts with BRCA1. Interacts with CDK2AP1. Interacts with CENPA. Interacts with CHD3. Interacts with CHD4. Interacts with CREBBP, and this interaction may be enhanced by the binding of phosphorylated CREB1 to CREBBP. Interacts with HDAC7. Interacts with MTA1. Interacts with PWWP2B. Interacts with RB1 (via viral protein-binding domain). Interacts with SUV39H1.

Its subcellular location is the nucleus. Functionally, core histone-binding subunit that may target chromatin remodeling factors, histone acetyltransferases and histone deacetylases to their histone substrates in a manner that is regulated by nucleosomal DNA. Component of several complexes which regulate chromatin metabolism. These include the type B histone acetyltransferase (HAT) complex, which is required for chromatin assembly following DNA replication; the core histone deacetylase (HDAC) complex, which promotes histone deacetylation and consequent transcriptional repression; the nucleosome remodeling and histone deacetylase complex (the NuRD complex), which promotes transcriptional repression by histone deacetylation and nucleosome remodeling; and the PRC2/EED-EZH2 complex, which promotes repression of homeotic genes during development; and the NURF (nucleosome remodeling factor) complex. This Homo sapiens (Human) protein is Histone-binding protein RBBP7 (RBBP7).